The sequence spans 255 residues: MTRSVSFPLFLFAVVLSLSSSLLADDPKPIRREVYEGGKIYDISHRYTPEIPAWESSEGLGKTFLRLAASMKNGSFANVSEMKLSVHSGTHVDAPGHFWDNYYDAGFDTDSLDLQVLNGPALLVDVPRDKNITAEVMESLHIQRGVRRVLFRTSNTDKRLMFKKEFDSSFAGFMTDGAKWLVENTDIKLIGLDYLSFAAFEESPATHRVILKGRDIIPVEALKLDGVEVGTYSLHCLPLRLVGAEGAPTRCILIK.

The N-terminal stretch at 1–24 is a signal peptide; it reads MTRSVSFPLFLFAVVLSLSSSLLA.

This sequence belongs to the Cyclase 1 superfamily.

Its subcellular location is the secreted. It is found in the extracellular space. The protein localises to the extracellular matrix. Acts as a negative regulator of fumonisin B1- and pathogen-induced programmed cell death (PCD), and regulates pathogen-induced symptom development. May function redundantly with CYCLASE2 for normal plant growth, development and viability. In Arabidopsis thaliana (Mouse-ear cress), this protein is Cyclase-like protein 1.